The sequence spans 161 residues: Peroxynitrite isomerase 2 (161 aa).

Positions 17-23 (GTWTGRG) match the GXWXGXG motif. Histidine 152 contacts heme b.

Belongs to the nitrobindin family. Homodimer. The cofactor is heme b.

The enzyme catalyses peroxynitrite = nitrate. It participates in nitrogen metabolism. Its function is as follows. Heme-binding protein able to scavenge peroxynitrite and to protect free L-tyrosine against peroxynitrite-mediated nitration, by acting as a peroxynitrite isomerase that converts peroxynitrite to nitrate. Therefore, this protein likely plays a role in peroxynitrite sensing and in the detoxification of reactive nitrogen and oxygen species (RNS and ROS, respectively). Is able to bind nitric oxide (NO) in vitro, but may act as a sensor of peroxynitrite levels in vivo. The polypeptide is Peroxynitrite isomerase 2 (Mycobacterium avium (strain 104)).